The sequence spans 97 residues: Small cell adhesion glycoprotein (97 aa).

The Extracellular portion of the chain corresponds to 1 to 36 (MNNLPATPSPEELMTTPVFQAPETLSPQAEEASTAL). T7 is a glycosylation site (O-linked (GalNAc...) threonine). A glycan (O-linked (GalNAc...) serine) is linked at S9. 3 O-linked (GalNAc...) threonine glycosylation sites follow: T15, T16, and T24. An O-linked (GalNAc...) serine glycan is attached at S26. The helical; Signal-anchor for type III membrane protein transmembrane segment at 37 to 57 (IAVVITVVFLTLLSVVTLIFF) threads the bilayer. The Cytoplasmic segment spans residues 58–97 (HLYKNKGSYVTYEPAEGEPSAILQMETDSAKGREKEEYFI).

Belongs to the SMAGP family. O-glycosylated. The O-glycan is modified with sialic acid residues.

It localises to the cell membrane. It is found in the cytoplasmic vesicle membrane. In terms of biological role, may play a role in epithelial cell-cell contacts. May play a role in tumor invasiveness and metastasis formation. This is Small cell adhesion glycoprotein (Smagp) from Mus musculus (Mouse).